Consider the following 146-residue polypeptide: MGRFIFMSFGLLVVFLSLSGTGADCPSDWSSYEGHCYRVFQQEMTWEAAEQFCAQQRKESHLVSFHSSEEVDFLVSITYPILKADLVWIGLRDIWNECRLEWTDGTKVDYKEWSEEPECIVSKTTDNQWISRPCSRTYSFVCKFQA.

The N-terminal stretch at Met-1–Ala-23 is a signal peptide. Disulfide bonds link Cys-25-Cys-36, Cys-53-Cys-142, and Cys-119-Cys-134. One can recognise a C-type lectin domain in the interval Tyr-32–Lys-143.

Belongs to the snaclec family. As to quaternary structure, heterodimer; disulfide-linked. As to expression, expressed by the venom gland.

It localises to the secreted. Interferes with one step of hemostasis (modulation of platelet aggregation, or coagulation cascade, for example). This Sistrurus catenatus edwardsii (Desert massasauga) protein is Snaclec 1.